The primary structure comprises 575 residues: Probable lysosomal cobalamin transporter (575 aa).

Helical transmembrane passes span 8–28 (LIWVVYAVVVVVLFAVASVFI), 46–66 (IVAITSLLATILLLPVDVALV), 95–115 (LVYYILYSLDILLCLLVVPFV), 144–164 (YTLSFIAILIILFLVGVFVPI), and 188–208 (ALTFALGLLITIGMYVYALHT). Asparagine 233 carries N-linked (GlcNAc...) asparagine glycosylation. The next 4 membrane-spanning stretches (helical) occupy residues 314–334 (LVGLILLLLVLLIWVSMILTA), 376–396 (AIFTMLVLLLFFGTVVGIATV), 420–440 (VMTAILMLSILALNYSISMIV), and 504–524 (FGAIFFWSQFAFIGVYLLALI). Residues 537 to 549 (QLDEDAEEAEEEA) are compositionally biased toward acidic residues. Residues 537 to 556 (QLDEDAEEAEEEALLSGSRR) are disordered.

Belongs to the LIMR family. LMBRD1 subfamily.

The protein resides in the lysosome membrane. In terms of biological role, probable lysosomal cobalamin transporter. Required to export cobalamin from lysosomes allowing its conversion to cofactors. The protein is Probable lysosomal cobalamin transporter of Emericella nidulans (strain FGSC A4 / ATCC 38163 / CBS 112.46 / NRRL 194 / M139) (Aspergillus nidulans).